An 833-amino-acid chain; its full sequence is Putative GPI inositol-deacylase C (833 aa).

Residue Ser130 is part of the active site. N-linked (GlcNAc...) asparagine glycosylation is found at Asn191 and Asn456. The next 5 helical transmembrane spans lie at 521–541 (ILFISLPSAILYAIFLVQFHA), 560–580 (YLLTSCLAGSGIAYLTGLSQV), 617–637 (VLAPIFTVFSTGMVVLITELV), 672–692 (TVFVAVISVLVLLFFPYQLAF), and 723–743 (TICVLMTWTCIINAPVLAVWI). A glycan (N-linked (GlcNAc...) asparagine) is linked at Asn772. Residues 787-807 (LLLAYTSLHCLFYGMMQAFMI) traverse the membrane as a helical segment.

This sequence belongs to the GPI inositol-deacylase family.

Its subcellular location is the endoplasmic reticulum membrane. Functionally, involved in inositol deacylation of GPI-anchored proteins which plays important roles in the quality control and ER-associated degradation of GPI-anchored proteins. In Yarrowia lipolytica (strain CLIB 122 / E 150) (Yeast), this protein is Putative GPI inositol-deacylase C (BST1C).